The sequence spans 430 residues: 3-phosphoshikimate 1-carboxyvinyltransferase (430 aa).

K23, S24, and R28 together coordinate 3-phosphoshikimate. K23 serves as a coordination point for phosphoenolpyruvate. 2 residues coordinate phosphoenolpyruvate: G95 and R123. The 3-phosphoshikimate site is built by S169, Q171, D315, and K342. Q171 is a binding site for phosphoenolpyruvate. D315 acts as the Proton acceptor in catalysis. 2 residues coordinate phosphoenolpyruvate: R346 and R388.

Belongs to the EPSP synthase family. As to quaternary structure, monomer.

Its subcellular location is the cytoplasm. It catalyses the reaction 3-phosphoshikimate + phosphoenolpyruvate = 5-O-(1-carboxyvinyl)-3-phosphoshikimate + phosphate. It participates in metabolic intermediate biosynthesis; chorismate biosynthesis; chorismate from D-erythrose 4-phosphate and phosphoenolpyruvate: step 6/7. Catalyzes the transfer of the enolpyruvyl moiety of phosphoenolpyruvate (PEP) to the 5-hydroxyl of shikimate-3-phosphate (S3P) to produce enolpyruvyl shikimate-3-phosphate and inorganic phosphate. This Streptococcus pyogenes serotype M2 (strain MGAS10270) protein is 3-phosphoshikimate 1-carboxyvinyltransferase.